The primary structure comprises 49 residues: Large ribosomal subunit protein bL33 (49 aa).

The protein belongs to the bacterial ribosomal protein bL33 family.

The chain is Large ribosomal subunit protein bL33 from Syntrophotalea carbinolica (strain DSM 2380 / NBRC 103641 / GraBd1) (Pelobacter carbinolicus).